Reading from the N-terminus, the 392-residue chain is 23S rRNA (uracil(747)-C(5))-methyltransferase RlmC (392 aa).

C4, C12, C15, and C93 together coordinate [4Fe-4S] cluster. Residues Q218, F247, E275, and N321 each contribute to the S-adenosyl-L-methionine site. Residue C348 is the Nucleophile of the active site.

Belongs to the class I-like SAM-binding methyltransferase superfamily. RNA M5U methyltransferase family. RlmC subfamily.

It carries out the reaction uridine(747) in 23S rRNA + S-adenosyl-L-methionine = 5-methyluridine(747) in 23S rRNA + S-adenosyl-L-homocysteine + H(+). In terms of biological role, catalyzes the formation of 5-methyl-uridine at position 747 (m5U747) in 23S rRNA. In Haemophilus influenzae (strain ATCC 51907 / DSM 11121 / KW20 / Rd), this protein is 23S rRNA (uracil(747)-C(5))-methyltransferase RlmC.